Consider the following 86-residue polypeptide: Neurotoxin-like protein NTL2 (86 aa).

The first 21 residues, 1–21, serve as a signal peptide directing secretion; sequence MKTLLLSLVVVTIVCLDLGYT. Intrachain disulfides connect Cys-24-Cys-45, Cys-38-Cys-63, Cys-67-Cys-78, and Cys-79-Cys-84.

It belongs to the three-finger toxin family. Short-chain subfamily. Orphan group I sub-subfamily. Expressed by the venom gland.

The protein resides in the secreted. This chain is Neurotoxin-like protein NTL2, found in Naja atra (Chinese cobra).